We begin with the raw amino-acid sequence, 336 residues long: CMP-sialic acid transporter (336 aa).

The Cytoplasmic portion of the chain corresponds to 1–9 (MAPARENVS). A helical transmembrane segment spans residues 10–30 (LFFKLYCLTVMTLVAAAYTVA). Residues 31–45 (LRYTRTTAEELYFST) are Lumenal-facing. Residues 46–64 (TAVCITEVIKLLISVGLLA) traverse the membrane as a helical segment. Lys55 contributes to the CMP-N-acetyl-beta-neuraminate binding site. The Cytoplasmic portion of the chain corresponds to 65 to 87 (KETGSLGRFKASLSENVLGSPKE). The chain crosses the membrane as a helical span at residues 88 to 108 (LAKLSVPSLVYAVQNNMAFLA). 101–102 (QN) lines the CMP-N-acetyl-beta-neuraminate pocket. Topologically, residues 109–114 (LSNLDA) are lumenal. A helical membrane pass occupies residues 115–135 (AVYQVTYQLKIPCTALCTVLM). 117-124 (YQVTYQLK) contributes to the CMP-N-acetyl-beta-neuraminate binding site. The Cytoplasmic segment spans residues 136 to 141 (LNRTLS). A helical transmembrane segment spans residues 142-160 (KLQWISVFMLCGGVTLVQW). Residues 161-175 (KPAQATKVVVAQNPL) are Lumenal-facing. A helical membrane pass occupies residues 176–196 (LGFGAIAIAVLCSGFAGVYFE). Residue Ser188 coordinates CMP-N-acetyl-beta-neuraminate. At 197–209 (KVLKSSDTSLWVR) the chain is on the cytoplasmic side. 210 to 214 (NIQMY) contributes to the CMP-N-acetyl-beta-neuraminate binding site. A helical transmembrane segment spans residues 210-228 (NIQMYLSGIVVTLAGTYLS). Residues 229-243 (DGAEIQEKGFFYGYT) are Lumenal-facing. Residues 244-262 (YYVWFVIFLASVGGLYTSV) form a helical membrane-spanning segment. Topologically, residues 263-269 (VVKYTDN) are cytoplasmic. The chain crosses the membrane as a helical span at residues 270 to 288 (IMKGFSAAAAIVLSTIASV). Residue Lys272 participates in CMP-N-acetyl-beta-neuraminate binding. Residues 289-296 (LLFGLQIT) are Lumenal-facing. Residues 297 to 315 (LSFALGALLVCVSIYLYGL) traverse the membrane as a helical segment. Residues 316–336 (PRQDTTSIQQEATSKERIIGV) are Cytoplasmic-facing. The segment at 316 to 336 (PRQDTTSIQQEATSKERIIGV) is disordered.

The protein belongs to the nucleotide-sugar transporter family. SLC35A subfamily. Monomer. In terms of tissue distribution, ubiquitous. Found in all the tissues examined including skeletal muscle, brain, heart, liver, kidney and spleen.

The protein localises to the golgi apparatus membrane. It carries out the reaction CMP-N-acetyl-beta-neuraminate(in) + CMP(out) = CMP-N-acetyl-beta-neuraminate(out) + CMP(in). The catalysed reaction is CMP-N-acetyl-beta-neuraminate(in) + AMP(out) = CMP-N-acetyl-beta-neuraminate(out) + AMP(in). It catalyses the reaction CDP-L-ribitol(in) + CDP(out) = CDP-L-ribitol(out) + CDP(in). The enzyme catalyses UMP(out) + CMP-N-acetyl-beta-neuraminate(in) = UMP(in) + CMP-N-acetyl-beta-neuraminate(out). Transports CMP-sialic acid from the cytosol into the Golgi apparatus, functioning as an antiporter that exchanges CMP-sialic acid for CMP. Binds both CMP-sialic acid and free CMP, but has higher affinity for free CMP. Also able to exchange CMP-sialic acid for AMP and UMP. Also mediates the transport of CDP-ribitol. The sequence is that of CMP-sialic acid transporter from Mus musculus (Mouse).